A 62-amino-acid chain; its full sequence is DNA-directed RNA polymerase subunit Rpo10 (62 aa).

Residues C6, C9, C43, and C44 each contribute to the Zn(2+) site.

This sequence belongs to the archaeal Rpo10/eukaryotic RPB10 RNA polymerase subunit family. As to quaternary structure, part of the RNA polymerase complex. It depends on Zn(2+) as a cofactor.

The protein resides in the cytoplasm. It catalyses the reaction RNA(n) + a ribonucleoside 5'-triphosphate = RNA(n+1) + diphosphate. Functionally, DNA-dependent RNA polymerase (RNAP) catalyzes the transcription of DNA into RNA using the four ribonucleoside triphosphates as substrates. This is DNA-directed RNA polymerase subunit Rpo10 from Methanosarcina acetivorans (strain ATCC 35395 / DSM 2834 / JCM 12185 / C2A).